Reading from the N-terminus, the 377-residue chain is Lipoyl synthase, mitochondrial (377 aa).

Residues Cys-103, Cys-108, Cys-114, Cys-134, Cys-138, Cys-141, and Ser-349 each contribute to the [4Fe-4S] cluster site. A Radical SAM core domain is found at 119–338 (EHGTQTATIM…EERGNELGFL (220 aa)).

This sequence belongs to the radical SAM superfamily. Lipoyl synthase family. Requires [4Fe-4S] cluster as cofactor.

The protein resides in the mitochondrion. It carries out the reaction [[Fe-S] cluster scaffold protein carrying a second [4Fe-4S](2+) cluster] + N(6)-octanoyl-L-lysyl-[protein] + 2 oxidized [2Fe-2S]-[ferredoxin] + 2 S-adenosyl-L-methionine + 4 H(+) = [[Fe-S] cluster scaffold protein] + N(6)-[(R)-dihydrolipoyl]-L-lysyl-[protein] + 4 Fe(3+) + 2 hydrogen sulfide + 2 5'-deoxyadenosine + 2 L-methionine + 2 reduced [2Fe-2S]-[ferredoxin]. The protein operates within protein modification; protein lipoylation via endogenous pathway; protein N(6)-(lipoyl)lysine from octanoyl-[acyl-carrier-protein]: step 2/2. Functionally, catalyzes the radical-mediated insertion of two sulfur atoms into the C-6 and C-8 positions of the octanoyl moiety bound to the lipoyl domains of lipoate-dependent enzymes, thereby converting the octanoylated domains into lipoylated derivatives. This is Lipoyl synthase, mitochondrial from Drosophila melanogaster (Fruit fly).